The following is a 289-amino-acid chain: Protease HtpX homolog (289 aa).

Helical transmembrane passes span 3-23 and 28-48; these read IVGTILFAFYSVAIAAAWFFF and TILAIAIVGSVVLVGVQYKVG. H129 is a binding site for Zn(2+). E130 is an active-site residue. Position 133 (H133) interacts with Zn(2+). 2 helical membrane-spanning segments follow: residues 144–164 and 172–192; these read LGQGIASIVGIVAQYIVLFSG and FLAIVVGNLVQFLVTLFVLAI. E197 serves as a coordination point for Zn(2+). Residues 222–250 form a disordered region; that stretch reads SQGNEQAAQQQRQRTSRGRGRRQRGQRND. Residues 235–246 show a composition bias toward basic residues; it reads RTSRGRGRRQRG.

This sequence belongs to the peptidase M48B family. It depends on Zn(2+) as a cofactor.

The protein resides in the cell membrane. This Halobacterium salinarum (strain ATCC 700922 / JCM 11081 / NRC-1) (Halobacterium halobium) protein is Protease HtpX homolog.